A 491-amino-acid polypeptide reads, in one-letter code: Ketol-acid reductoisomerase (NADP(+)) (491 aa).

A KARI N-terminal Rossmann domain is found at 15-208 (AQLGKCRFMG…GGHRAGVLES (194 aa)). Residues 45–48 (CGAQ), Arg68, Arg76, Ser78, and 108–110 (DKQ) contribute to the NADP(+) site. The active site involves His132. Gly158 is a binding site for NADP(+). 2 KARI C-terminal knotted domains span residues 209–344 (SFVA…TAPQ) and 345–484 (YEGK…MTDM). 4 residues coordinate Mg(2+): Asp217, Glu221, Glu389, and Glu393. Ser414 lines the substrate pocket.

The protein belongs to the ketol-acid reductoisomerase family. The cofactor is Mg(2+).

The catalysed reaction is (2R)-2,3-dihydroxy-3-methylbutanoate + NADP(+) = (2S)-2-acetolactate + NADPH + H(+). The enzyme catalyses (2R,3R)-2,3-dihydroxy-3-methylpentanoate + NADP(+) = (S)-2-ethyl-2-hydroxy-3-oxobutanoate + NADPH + H(+). It participates in amino-acid biosynthesis; L-isoleucine biosynthesis; L-isoleucine from 2-oxobutanoate: step 2/4. The protein operates within amino-acid biosynthesis; L-valine biosynthesis; L-valine from pyruvate: step 2/4. Involved in the biosynthesis of branched-chain amino acids (BCAA). Catalyzes an alkyl-migration followed by a ketol-acid reduction of (S)-2-acetolactate (S2AL) to yield (R)-2,3-dihydroxy-isovalerate. In the isomerase reaction, S2AL is rearranged via a Mg-dependent methyl migration to produce 3-hydroxy-3-methyl-2-ketobutyrate (HMKB). In the reductase reaction, this 2-ketoacid undergoes a metal-dependent reduction by NADPH to yield (R)-2,3-dihydroxy-isovalerate. The protein is Ketol-acid reductoisomerase (NADP(+)) of Salmonella typhimurium (strain LT2 / SGSC1412 / ATCC 700720).